The chain runs to 82 residues: uncharacterized protein (82 aa).

Could be a silencing control element for the regulation of the restriction system. This is an uncharacterized protein from Herpetosiphon aurantiacus (Herpetosiphon giganteus).